We begin with the raw amino-acid sequence, 431 residues long: Enolase (431 aa).

Residue Gln-167 participates in (2R)-2-phosphoglycerate binding. The active-site Proton donor is the Glu-209. Mg(2+) is bound by residues Asp-246, Glu-289, and Asp-316. (2R)-2-phosphoglycerate contacts are provided by Lys-341, Arg-370, Ser-371, and Lys-392. Catalysis depends on Lys-341, which acts as the Proton acceptor.

This sequence belongs to the enolase family. In terms of assembly, component of the RNA degradosome, a multiprotein complex involved in RNA processing and mRNA degradation. It depends on Mg(2+) as a cofactor.

It localises to the cytoplasm. The protein resides in the secreted. It is found in the cell surface. It carries out the reaction (2R)-2-phosphoglycerate = phosphoenolpyruvate + H2O. The protein operates within carbohydrate degradation; glycolysis; pyruvate from D-glyceraldehyde 3-phosphate: step 4/5. Functionally, catalyzes the reversible conversion of 2-phosphoglycerate (2-PG) into phosphoenolpyruvate (PEP). It is essential for the degradation of carbohydrates via glycolysis. The chain is Enolase from Shewanella denitrificans (strain OS217 / ATCC BAA-1090 / DSM 15013).